We begin with the raw amino-acid sequence, 261 residues long: (3R)-3-hydroxyacyl-CoA dehydrogenase (261 aa).

NAD(+) is bound by residues 15–23 and 42–43; these read LVTGAGSGI and DL. Position 60 is a phosphoserine (Ser-60). An NAD(+)-binding site is contributed by 74 to 76; the sequence is ADV. A substrate-binding site is contributed by Ser-156. Lys-160 carries the post-translational modification N6-succinyllysine. Tyr-169 acts as the Proton acceptor in catalysis. NAD(+) contacts are provided by residues 169-173 and 202-204; these read YAASK and IAT. N6-succinyllysine is present on Lys-173.

Belongs to the short-chain dehydrogenases/reductases (SDR) family. In terms of assembly, heterotetramer with CBR4; contains two molecules of HSD17B8 and CBR4. Widely expressed, particularly abundant in prostate, placenta and kidney. Expressed at protein level in various tissues like brain, cerebellum, heart, lung, kidney, ovary, testis, adrenals and prostate.

The protein localises to the mitochondrion matrix. It catalyses the reaction a (3R)-3-hydroxyacyl-CoA + NAD(+) = a 3-oxoacyl-CoA + NADH + H(+). The catalysed reaction is 17beta-estradiol + NAD(+) = estrone + NADH + H(+). It carries out the reaction testosterone + NAD(+) = androst-4-ene-3,17-dione + NADH + H(+). The enzyme catalyses 17beta-hydroxy-5alpha-androstan-3-one + NAD(+) = 5alpha-androstan-3,17-dione + NADH + H(+). The protein operates within steroid biosynthesis; estrogen biosynthesis. It participates in lipid metabolism; fatty acid biosynthesis. Its pathway is lipid metabolism; mitochondrial fatty acid beta-oxidation. Functionally, required for the solubility and assembly of the heterotetramer 3-ketoacyl-[acyl carrier protein] (ACP) reductase functional complex (KAR or KAR1) that forms part of the mitochondrial fatty acid synthase (mtFAS). Alpha-subunit of the KAR complex that acts as a scaffold protein required for the stability of carbonyl reductase type-4 (CBR4, beta-subunit of the KAR complex) and for its 3-ketoacyl-ACP reductase activity, thereby participating in mitochondrial fatty acid biosynthesis. Catalyzes the NAD-dependent conversion of (3R)-3-hydroxyacyl-CoA into 3-ketoacyl-CoA (3-oxoacyl-CoA) with no chain length preference; this enzymatic activity is not needed for the KAR function. Prefers (3R)-3-hydroxyacyl-CoA over (3S)-3-hydroxyacyl-CoA and displays enzymatic activity only in the presence of NAD(+). Cooperates with enoyl-CoA hydratase 1 in mitochondria, together they constitute an alternative route to the auxiliary enzyme pathways for the breakdown of Z-PUFA (cis polyunsaturated fatty acid) enoyl-esters. NAD-dependent 17-beta-hydroxysteroid dehydrogenase with highest activity towards estradiol (17beta-estradiol or E2). Has very low activity towards testosterone and dihydrotestosterone (17beta-hydroxy-5alpha-androstan-3-one). Primarily an oxidative enzyme, it can switch to a reductive mode determined in the appropriate physiologic milieu and catalyze the reduction of estrone (E1) to form biologically active 17beta-estradiol. This is (3R)-3-hydroxyacyl-CoA dehydrogenase (HSD17B8) from Homo sapiens (Human).